Here is an 82-residue protein sequence, read N- to C-terminus: Sec-independent protein translocase protein TatA (82 aa).

The helical transmembrane segment at 1 to 21 (MGGISIWQLLIIAVIIVLLFG) threads the bilayer. The segment at 48 to 82 (SAKDAKKDADFVPQNLEKKEAETVEKQKQNDKEQA) is disordered.

The protein belongs to the TatA/E family. As to quaternary structure, the Tat system comprises two distinct complexes: a TatABC complex, containing multiple copies of TatA, TatB and TatC subunits, and a separate TatA complex, containing only TatA subunits. Substrates initially bind to the TatABC complex, which probably triggers association of the separate TatA complex to form the active translocon.

The protein localises to the cell inner membrane. Part of the twin-arginine translocation (Tat) system that transports large folded proteins containing a characteristic twin-arginine motif in their signal peptide across membranes. TatA could form the protein-conducting channel of the Tat system. This Aliivibrio salmonicida (strain LFI1238) (Vibrio salmonicida (strain LFI1238)) protein is Sec-independent protein translocase protein TatA.